A 312-amino-acid chain; its full sequence is MEFHHIPVLLEEVLEALQPRPDGLYLDGTVGGGGHSAAILEKTAGQGRLIGLDQDPRALAAARIKLEKFADQVTLVRSNFRQLGSVVEELGQKGKIDGILLDIGVSSHQLDEAERGFTYRAEAPLDMRMNPDGAVTAAQILNEYPEGEIFRILWEYGEERWSKRIAQFIVNRRTEQPLASTTDLVDVIRAAIPAAARQEGGHPAKRTFQALRIAVNDELGALQEALPAALDALAPSGRLAVISFHSLEDRIVKNFFAEQAKGCTCPPDMPVCGCGKKARLKIITRKPITGSEEELKINPRSQSAKLRVAQKI.

Residues 33–35 (GGH), Asp53, Phe80, Asp102, and Gln109 contribute to the S-adenosyl-L-methionine site.

Belongs to the methyltransferase superfamily. RsmH family.

The protein localises to the cytoplasm. The enzyme catalyses cytidine(1402) in 16S rRNA + S-adenosyl-L-methionine = N(4)-methylcytidine(1402) in 16S rRNA + S-adenosyl-L-homocysteine + H(+). Functionally, specifically methylates the N4 position of cytidine in position 1402 (C1402) of 16S rRNA. The polypeptide is Ribosomal RNA small subunit methyltransferase H (Heliobacterium mobile (Heliobacillus mobilis)).